An 855-amino-acid polypeptide reads, in one-letter code: DNA mismatch repair protein MutS (855 aa).

Residue 616–623 (GPNMGGKS) participates in ATP binding.

It belongs to the DNA mismatch repair MutS family.

In terms of biological role, this protein is involved in the repair of mismatches in DNA. It is possible that it carries out the mismatch recognition step. This protein has a weak ATPase activity. The sequence is that of DNA mismatch repair protein MutS from Salmonella gallinarum (strain 287/91 / NCTC 13346).